A 66-amino-acid chain; its full sequence is Brevinin-1DYb (66 aa).

The first 22 residues, 1–22, serve as a signal peptide directing secretion; the sequence is MFTLKKSLLLLFFLGTISLSLC. Positions 23–44 are excised as a propeptide; the sequence is EEERNAEEERRDYPEERDVEVE. Cysteines 60 and 66 form a disulfide.

In terms of tissue distribution, expressed by the skin glands.

The protein localises to the secreted. Antimicrobial peptide. Has low activity against the Gram-positive bacterium S.aureus and the Gram-negative bacterium E.coli (MIC&lt;15 uM). Has a strong hemolytic activity. The protein is Brevinin-1DYb of Rana dybowskii (Dybovsky's frog).